A 322-amino-acid chain; its full sequence is Heterogeneous nuclear ribonucleoprotein D-like (322 aa).

The segment at 1 to 36 (MTGTARSALPLPQSPARALRPSGAARAAPSLSPSRF) is disordered. Residue Arg-6 is modified to Omega-N-methylarginine. Positions 14–36 (SPARALRPSGAARAAPSLSPSRF) are enriched in low complexity. RRM domains lie at 51 to 133 (NKMF…KGKE) and 136 to 215 (KKVF…QPKE). Lys-64 is subject to N6-methyllysine. Residue Lys-112 forms a Glycyl lysine isopeptide (Lys-Gly) (interchain with G-Cter in SUMO2) linkage. N6-acetyllysine is present on Lys-119. Ser-144 carries the phosphoserine modification. Disordered stretches follow at residues 216 to 251 (VYRQ…NWNQ) and 299 to 322 (SGQQ…YQPY). The span at 226–245 (GGRGAAAGGRGGARGRGRGQ) shows a compositional bias: gly residues. Residues 245 to 322 (QGQNWNQGFN…GNHQNNYQPY (78 aa)) are necessary for interaction with TNPO1. Arg-310 bears the Dimethylated arginine; alternate mark. Arg-310 is subject to Omega-N-methylarginine; alternate.

As to quaternary structure, interacts with TNPO1 and ZNF148. In terms of processing, dimethylation of Arg-310 is probably of the asymmetric type.

The protein resides in the nucleus. It is found in the cytoplasm. In terms of biological role, acts as a transcriptional regulator. Promotes transcription repression. Promotes transcription activation in differentiated myotubes. Binds to double- and single-stranded DNA sequences. Binds to the transcription suppressor CATR sequence of the COX5B promoter. Binds with high affinity to RNA molecules that contain AU-rich elements (AREs) found within the 3'-UTR of many proto-oncogenes and cytokine mRNAs. Binds both to nuclear and cytoplasmic poly(A) mRNAs. Binds to poly(G) and poly(A), but not to poly(U) or poly(C) RNA homopolymers. Binds to the 5'-ACUAGC-3' RNA consensus sequence. The sequence is that of Heterogeneous nuclear ribonucleoprotein D-like (Hnrnpdl) from Rattus norvegicus (Rat).